The chain runs to 108 residues: UPF0102 protein WS0451 (108 aa).

It belongs to the UPF0102 family.

This chain is UPF0102 protein WS0451, found in Wolinella succinogenes (strain ATCC 29543 / DSM 1740 / CCUG 13145 / JCM 31913 / LMG 7466 / NCTC 11488 / FDC 602W) (Vibrio succinogenes).